The following is a 275-amino-acid chain: 3-deoxy-manno-octulosonate cytidylyltransferase (275 aa).

Belongs to the KdsB family.

The protein resides in the cytoplasm. The catalysed reaction is 3-deoxy-alpha-D-manno-oct-2-ulosonate + CTP = CMP-3-deoxy-beta-D-manno-octulosonate + diphosphate. It participates in nucleotide-sugar biosynthesis; CMP-3-deoxy-D-manno-octulosonate biosynthesis; CMP-3-deoxy-D-manno-octulosonate from 3-deoxy-D-manno-octulosonate and CTP: step 1/1. Its pathway is bacterial outer membrane biogenesis; lipopolysaccharide biosynthesis. Its function is as follows. Activates KDO (a required 8-carbon sugar) for incorporation into bacterial lipopolysaccharide in Gram-negative bacteria. The sequence is that of 3-deoxy-manno-octulosonate cytidylyltransferase from Psychrobacter sp. (strain PRwf-1).